The following is a 200-amino-acid chain: Holliday junction branch migration complex subunit RuvA (200 aa).

Residues 1–64 are domain I; that stretch reads MITSIQGTLV…EDSQTLYGFA (64 aa). Residues 65-144 are domain II; it reads SPAERDFFRL…ATGAAPGLAT (80 aa). The tract at residues 145 to 151 is flexible linker; sequence QPAAAAS. Residues 152-200 are domain III; that stretch reads PGASAHRDAVAALVALGYRSADADEAVRRASLALGEAATTESLIKKALS.

It belongs to the RuvA family. In terms of assembly, homotetramer. Forms an RuvA(8)-RuvB(12)-Holliday junction (HJ) complex. HJ DNA is sandwiched between 2 RuvA tetramers; dsDNA enters through RuvA and exits via RuvB. An RuvB hexamer assembles on each DNA strand where it exits the tetramer. Each RuvB hexamer is contacted by two RuvA subunits (via domain III) on 2 adjacent RuvB subunits; this complex drives branch migration. In the full resolvosome a probable DNA-RuvA(4)-RuvB(12)-RuvC(2) complex forms which resolves the HJ.

Its subcellular location is the cytoplasm. The RuvA-RuvB-RuvC complex processes Holliday junction (HJ) DNA during genetic recombination and DNA repair, while the RuvA-RuvB complex plays an important role in the rescue of blocked DNA replication forks via replication fork reversal (RFR). RuvA specifically binds to HJ cruciform DNA, conferring on it an open structure. The RuvB hexamer acts as an ATP-dependent pump, pulling dsDNA into and through the RuvAB complex. HJ branch migration allows RuvC to scan DNA until it finds its consensus sequence, where it cleaves and resolves the cruciform DNA. The chain is Holliday junction branch migration complex subunit RuvA from Opitutus terrae (strain DSM 11246 / JCM 15787 / PB90-1).